We begin with the raw amino-acid sequence, 55 residues long: Large ribosomal subunit protein bL33 (55 aa).

It belongs to the bacterial ribosomal protein bL33 family.

The sequence is that of Large ribosomal subunit protein bL33 from Paramagnetospirillum magneticum (strain ATCC 700264 / AMB-1) (Magnetospirillum magneticum).